The following is a 667-amino-acid chain: WD repeat-containing protein 48 homolog (667 aa).

WD repeat units follow at residues 26 to 65 (QHRN…NEKY), 71 to 110 (HHND…CMST), 113 to 152 (THRD…ALTA), 164 to 203 (GSKD…RSMK), 206 to 245 (GHTE…CVQT), 248 to 287 (VHKE…NKML), 290 to 329 (EEQA…RCTL), and 350 to 389 (KGGA…KKEQ). Positions 591–615 (ETTPSGGNANNSLQNSQSDANSEGS) are disordered.

Belongs to the WD repeat WDR48 family. Catalytic component of the Usp12-46 deubiquitylase complex consisting of Usp12-46, Wdr20 and Uaf1; regulatory subunit that, together wtih Wdr20, stabilizes Usp12-46. The Usp12-46 deubiquitylase complex associates with arr/arrow; the interaction leads to deubiquitination and stabilization of arr/arrow.

Its function is as follows. Regulatory component of the Usp12-46 deubiquitylase complex. activates deubiquitination by increasing the catalytic turnover without increasing the affinity of deubiquitinating enzymes for the substrate. The complex deubiquitylates the wg/wingless-signaling receptor arr/arrow, which stabilizes the receptor and increases its concentration at the cell surface; this enhances the sensitivity of cells to wg/wingless-signal stimulation. This increases the amplitude and spatial range of the signaling response to the wg/wingless morphogen gradient, facilitating the precise concentration-dependent regulation of its target genes. Together with Wdr20 and Usp12-46 required for wg/wingless-mediated signaling in the wing imaginal disc and for wg/wingless-dependent regulation of intestinal stem cell proliferation. The polypeptide is WD repeat-containing protein 48 homolog (Drosophila ananassae (Fruit fly)).